Here is a 181-residue protein sequence, read N- to C-terminus: Ribonuclease HII (181 aa).

An RNase H type-2 domain is found at 1–181; it reads MICGIDEVGR…SLHRKSFRLI (181 aa). A divalent metal cation contacts are provided by D6, E7, and D98.

Belongs to the RNase HII family. Mn(2+) is required as a cofactor. The cofactor is Mg(2+).

Its subcellular location is the cytoplasm. It carries out the reaction Endonucleolytic cleavage to 5'-phosphomonoester.. Its function is as follows. Endonuclease that specifically degrades the RNA of RNA-DNA hybrids. This chain is Ribonuclease HII, found in Borrelia recurrentis (strain A1).